The following is a 451-amino-acid chain: D-aminoacyl-tRNA deacylase (451 aa).

The disordered stretch occupies residues 410-437 (RTADIPEGPKFGKLASGESVEIDGEEID).

Belongs to the DtdA deacylase family. Monomer. Zn(2+) is required as a cofactor.

The enzyme catalyses a D-aminoacyl-tRNA + H2O = a tRNA + a D-alpha-amino acid + H(+). The catalysed reaction is glycyl-tRNA(Ala) + H2O = tRNA(Ala) + glycine + H(+). In terms of biological role, D-aminoacyl-tRNA deacylase with broad substrate specificity. By recycling D-aminoacyl-tRNA to D-amino acids and free tRNA molecules, this enzyme counteracts the toxicity associated with the formation of D-aminoacyl-tRNA entities in vivo. This Haloarcula marismortui (strain ATCC 43049 / DSM 3752 / JCM 8966 / VKM B-1809) (Halobacterium marismortui) protein is D-aminoacyl-tRNA deacylase.